Consider the following 955-residue polypeptide: Mediator of RNA polymerase II transcription subunit 16 (955 aa).

The protein belongs to the Mediator complex subunit 16 family. Component of the Mediator complex.

The protein localises to the nucleus. Functionally, component of the Mediator complex, a coactivator involved in the regulated transcription of nearly all RNA polymerase II-dependent genes. Mediator functions as a bridge to convey information from gene-specific regulatory proteins to the basal RNA polymerase II transcription machinery. Mediator is recruited to promoters by direct interactions with regulatory proteins and serves as a scaffold for the assembly of a functional preinitiation complex with RNA polymerase II and the general transcription factors. The sequence is that of Mediator of RNA polymerase II transcription subunit 16 (sin4) from Neosartorya fischeri (strain ATCC 1020 / DSM 3700 / CBS 544.65 / FGSC A1164 / JCM 1740 / NRRL 181 / WB 181) (Aspergillus fischerianus).